A 390-amino-acid chain; its full sequence is Flagellar P-ring protein (390 aa).

The N-terminal stretch at 1 to 25 (MLLKKIFLTGIIVLDLVFFVSYGFA) is a signal peptide.

Belongs to the FlgI family. In terms of assembly, the basal body constitutes a major portion of the flagellar organelle and consists of four rings (L,P,S, and M) mounted on a central rod.

The protein resides in the periplasm. It localises to the bacterial flagellum basal body. Its function is as follows. Assembles around the rod to form the L-ring and probably protects the motor/basal body from shearing forces during rotation. The protein is Flagellar P-ring protein of Syntrophus aciditrophicus (strain SB).